We begin with the raw amino-acid sequence, 102 residues long: Protein translation factor SUI1 homolog (102 aa).

The protein belongs to the SUI1 family.

The polypeptide is Protein translation factor SUI1 homolog (Nitrosopumilus maritimus (strain SCM1)).